Consider the following 468-residue polypeptide: Adenylyltransferase and sulfurtransferase MOCS3-1 (468 aa).

ATP-binding positions include G111, D132, 139 to 143 (NNLHR), K156, and 200 to 201 (DN). 2 residues coordinate Zn(2+): C241 and C244. The Glycyl thioester intermediate; for adenylyltransferase activity role is filled by C258. Residues C316 and C319 each coordinate Zn(2+). The 96-residue stretch at 371 to 466 (DGEPHLLLDV…WGRDVDPDFP (96 aa)) folds into the Rhodanese domain. The active-site Cysteine persulfide intermediate; for sulfurtransferase activity is C426.

It in the N-terminal section; belongs to the HesA/MoeB/ThiF family. UBA4 subfamily. Requires Zn(2+) as cofactor.

It localises to the cytoplasm. The catalysed reaction is [molybdopterin-synthase sulfur-carrier protein]-C-terminal Gly-Gly + ATP + H(+) = [molybdopterin-synthase sulfur-carrier protein]-C-terminal Gly-Gly-AMP + diphosphate. The enzyme catalyses [molybdopterin-synthase sulfur-carrier protein]-C-terminal Gly-Gly-AMP + S-sulfanyl-L-cysteinyl-[cysteine desulfurase] + AH2 = [molybdopterin-synthase sulfur-carrier protein]-C-terminal-Gly-aminoethanethioate + L-cysteinyl-[cysteine desulfurase] + A + AMP + 2 H(+). Its pathway is tRNA modification; 5-methoxycarbonylmethyl-2-thiouridine-tRNA biosynthesis. The protein operates within cofactor biosynthesis; molybdopterin biosynthesis. Its function is as follows. Plays a central role in 2-thiolation of mcm(5)S(2)U at tRNA wobble positions of cytosolic tRNA(Lys), tRNA(Glu) and tRNA(Gln). Also essential during biosynthesis of the molybdenum cofactor. Acts by mediating the C-terminal thiocarboxylation of sulfur carriers URM1 and MOCS2A. Its N-terminus first activates URM1 and MOCS2A as acyl-adenylates (-COAMP), then the persulfide sulfur on the catalytic cysteine is transferred to URM1 and MOCS2A to form thiocarboxylation (-COSH) of their C-terminus. The reaction probably involves hydrogen sulfide that is generated from the persulfide intermediate and that acts as a nucleophile towards URM1 and MOCS2A. Subsequently, a transient disulfide bond is formed. Does not use thiosulfate as sulfur donor; NFS1 probably acting as a sulfur donor for thiocarboxylation reactions. In Zea mays (Maize), this protein is Adenylyltransferase and sulfurtransferase MOCS3-1.